The primary structure comprises 459 residues: Phosphomethylpyrimidine synthase (459 aa).

Residues asparagine 80, methionine 109, tyrosine 139, histidine 175, 195 to 197, 236 to 239, and glutamate 275 contribute to the substrate site; these read SRG and DSLR. Residue histidine 279 coordinates Zn(2+). A substrate-binding site is contributed by tyrosine 302. Histidine 343 lines the Zn(2+) pocket. [4Fe-4S] cluster contacts are provided by cysteine 423, cysteine 426, and cysteine 431.

Belongs to the ThiC family. [4Fe-4S] cluster serves as cofactor.

The catalysed reaction is 5-amino-1-(5-phospho-beta-D-ribosyl)imidazole + S-adenosyl-L-methionine = 4-amino-2-methyl-5-(phosphooxymethyl)pyrimidine + CO + 5'-deoxyadenosine + formate + L-methionine + 3 H(+). It participates in cofactor biosynthesis; thiamine diphosphate biosynthesis. In terms of biological role, catalyzes the synthesis of the hydroxymethylpyrimidine phosphate (HMP-P) moiety of thiamine from aminoimidazole ribotide (AIR) in a radical S-adenosyl-L-methionine (SAM)-dependent reaction. This chain is Phosphomethylpyrimidine synthase, found in Prochlorococcus marinus (strain MIT 9303).